The chain runs to 500 residues: Cytochrome P450 2D28 (500 aa).

C446 serves as a coordination point for heme.

Belongs to the cytochrome P450 family. Heme serves as cofactor.

The protein resides in the endoplasmic reticulum membrane. Its subcellular location is the microsome membrane. The polypeptide is Cytochrome P450 2D28 (CYP2D28A) (Mesocricetus auratus (Golden hamster)).